We begin with the raw amino-acid sequence, 345 residues long: L-threonine 3-dehydrogenase (345 aa).

Cysteine 42 lines the Zn(2+) pocket. Catalysis depends on charge relay system residues threonine 44 and histidine 47. Positions 67, 68, 97, 100, 103, and 111 each coordinate Zn(2+). NAD(+) contacts are provided by residues isoleucine 179, aspartate 199, arginine 204, 266-268 (LGI), and 290-291 (IY).

This sequence belongs to the zinc-containing alcohol dehydrogenase family. As to quaternary structure, homotetramer. It depends on Zn(2+) as a cofactor.

It is found in the cytoplasm. The enzyme catalyses L-threonine + NAD(+) = (2S)-2-amino-3-oxobutanoate + NADH + H(+). The protein operates within amino-acid degradation; L-threonine degradation via oxydo-reductase pathway; glycine from L-threonine: step 1/2. In terms of biological role, catalyzes the NAD(+)-dependent oxidation of L-threonine to 2-amino-3-ketobutyrate. The sequence is that of L-threonine 3-dehydrogenase from Sinorhizobium fredii (strain NBRC 101917 / NGR234).